A 163-amino-acid polypeptide reads, in one-letter code: NADH-quinone oxidoreductase subunit I (163 aa).

4Fe-4S ferredoxin-type domains are found at residues 53 to 83 (LRRYPNGEERCIACKLCEAICPAQAITIEAG) and 94 to 123 (VRYDIDMVKCIYCGFCQEACPVDAIVEGPN). [4Fe-4S] cluster is bound by residues Cys-63, Cys-66, Cys-69, Cys-73, Cys-103, Cys-106, Cys-109, and Cys-113.

It belongs to the complex I 23 kDa subunit family. In terms of assembly, NDH-1 is composed of 14 different subunits. Subunits NuoA, H, J, K, L, M, N constitute the membrane sector of the complex. Requires [4Fe-4S] cluster as cofactor.

It is found in the cell inner membrane. The catalysed reaction is a quinone + NADH + 5 H(+)(in) = a quinol + NAD(+) + 4 H(+)(out). Its function is as follows. NDH-1 shuttles electrons from NADH, via FMN and iron-sulfur (Fe-S) centers, to quinones in the respiratory chain. The immediate electron acceptor for the enzyme in this species is believed to be ubiquinone. Couples the redox reaction to proton translocation (for every two electrons transferred, four hydrogen ions are translocated across the cytoplasmic membrane), and thus conserves the redox energy in a proton gradient. The chain is NADH-quinone oxidoreductase subunit I from Rhizobium johnstonii (strain DSM 114642 / LMG 32736 / 3841) (Rhizobium leguminosarum bv. viciae).